The primary structure comprises 349 residues: Succinylglutamate desuccinylase (349 aa).

3 residues coordinate Zn(2+): H70, E73, and H166. The active site involves E229.

Belongs to the AspA/AstE family. Succinylglutamate desuccinylase subfamily. Requires Zn(2+) as cofactor.

It carries out the reaction N-succinyl-L-glutamate + H2O = L-glutamate + succinate. It functions in the pathway amino-acid degradation; L-arginine degradation via AST pathway; L-glutamate and succinate from L-arginine: step 5/5. Transforms N(2)-succinylglutamate into succinate and glutamate. The sequence is that of Succinylglutamate desuccinylase from Burkholderia mallei (strain ATCC 23344).